Consider the following 906-residue polypeptide: Aconitate hydratase A (906 aa).

[4Fe-4S] cluster is bound by residues Cys443, Cys509, and Cys512.

The protein belongs to the aconitase/IPM isomerase family. In terms of assembly, monomer. [4Fe-4S] cluster is required as a cofactor.

It catalyses the reaction citrate = D-threo-isocitrate. It carries out the reaction (2S,3R)-3-hydroxybutane-1,2,3-tricarboxylate = 2-methyl-cis-aconitate + H2O. The protein operates within carbohydrate metabolism; tricarboxylic acid cycle; isocitrate from oxaloacetate: step 2/2. Its pathway is organic acid metabolism; propanoate degradation. In terms of biological role, involved in the catabolism of short chain fatty acids (SCFA) via the tricarboxylic acid (TCA)(acetyl degradation route) and probably via the 2-methylcitrate cycle I (propionate degradation route). Catalyzes the reversible isomerization of citrate to isocitrate via cis-aconitate. Could catalyze the hydration of 2-methyl-cis-aconitate to yield (2R,3S)-2-methylisocitrate. The apo form of AcnA functions as a RNA-binding regulatory protein. The polypeptide is Aconitate hydratase A (Bradyrhizobium diazoefficiens (strain JCM 10833 / BCRC 13528 / IAM 13628 / NBRC 14792 / USDA 110)).